The primary structure comprises 361 residues: Ribosomal RNA large subunit methyltransferase M (361 aa).

Residues S190, 223–226, D242, D262, and D280 each bind S-adenosyl-L-methionine; that span reads CPGG. The active-site Proton acceptor is the K309.

It belongs to the class I-like SAM-binding methyltransferase superfamily. RNA methyltransferase RlmE family. RlmM subfamily. In terms of assembly, monomer.

The protein resides in the cytoplasm. It catalyses the reaction cytidine(2498) in 23S rRNA + S-adenosyl-L-methionine = 2'-O-methylcytidine(2498) in 23S rRNA + S-adenosyl-L-homocysteine + H(+). Its function is as follows. Catalyzes the 2'-O-methylation at nucleotide C2498 in 23S rRNA. The chain is Ribosomal RNA large subunit methyltransferase M from Actinobacillus pleuropneumoniae serotype 7 (strain AP76).